Reading from the N-terminus, the 282-residue chain is Biotin synthase (282 aa).

The region spanning 1–230 (MSDNKIYLCA…NQMLMIAGGR (230 aa)) is the Radical SAM core domain. The [4Fe-4S] cluster site is built by C19, C23, and C26. The [2Fe-2S] cluster site is built by C63, C98, and C156.

It belongs to the radical SAM superfamily. Biotin synthase family. As to quaternary structure, homodimer. Requires [4Fe-4S] cluster as cofactor. It depends on [2Fe-2S] cluster as a cofactor.

The catalysed reaction is (4R,5S)-dethiobiotin + (sulfur carrier)-SH + 2 reduced [2Fe-2S]-[ferredoxin] + 2 S-adenosyl-L-methionine = (sulfur carrier)-H + biotin + 2 5'-deoxyadenosine + 2 L-methionine + 2 oxidized [2Fe-2S]-[ferredoxin]. It functions in the pathway cofactor biosynthesis; biotin biosynthesis; biotin from 7,8-diaminononanoate: step 2/2. In terms of biological role, catalyzes the conversion of dethiobiotin (DTB) to biotin by the insertion of a sulfur atom into dethiobiotin via a radical-based mechanism. This Aliarcobacter butzleri (strain RM4018) (Arcobacter butzleri) protein is Biotin synthase.